A 114-amino-acid polypeptide reads, in one-letter code: Kita-kyushu lung cancer antigen 1 homolog (114 aa).

At methionine 1–tyrosine 4 the chain is on the cytoplasmic side. A helical; Signal-anchor for type II membrane protein membrane pass occupies residues leucine 5–tyrosine 22. Over arginine 23–threonine 114 the chain is Extracellular. An N-linked (GlcNAc...) asparagine glycan is attached at asparagine 84.

It localises to the cell membrane. This Macaca fascicularis (Crab-eating macaque) protein is Kita-kyushu lung cancer antigen 1 homolog (CT83).